The chain runs to 115 residues: SOSS complex subunit C homolog (115 aa).

This sequence belongs to the SOSS-C family.

The polypeptide is SOSS complex subunit C homolog (Drosophila grimshawi (Hawaiian fruit fly)).